Reading from the N-terminus, the 252-residue chain is Aliphatic sulfonates import ATP-binding protein SsuB 1 (252 aa).

The ABC transporter domain maps to 6–234 (LQLHIAGKRF…PRDRQAHEAA (229 aa)). ATP is bound at residue 38-45 (GASGCGKS).

Belongs to the ABC transporter superfamily. Aliphatic sulfonates importer (TC 3.A.1.17.2) family. In terms of assembly, the complex is composed of two ATP-binding proteins (SsuB), two transmembrane proteins (SsuC) and a solute-binding protein (SsuA).

It localises to the cell inner membrane. The enzyme catalyses ATP + H2O + aliphatic sulfonate-[sulfonate-binding protein]Side 1 = ADP + phosphate + aliphatic sulfonateSide 2 + [sulfonate-binding protein]Side 1.. In terms of biological role, part of the ABC transporter complex SsuABC involved in aliphatic sulfonates import. Responsible for energy coupling to the transport system. The polypeptide is Aliphatic sulfonates import ATP-binding protein SsuB 1 (Xanthomonas axonopodis pv. citri (strain 306)).